A 538-amino-acid polypeptide reads, in one-letter code: Sensor protein CitS (538 aa).

The Cytoplasmic segment spans residues 1-13; the sequence is MKRRLFPLTFSAK. A helical membrane pass occupies residues 14-34; the sequence is MMGFIALLIIAMFVLLGVFLN. Topologically, residues 35-174 are extracellular; the sequence is EQYARTLEEQ…DIQQVIGERL (140 aa). The helical transmembrane segment at 175 to 195 threads the bilayer; that stretch reads IAMWQIVVVIMILGLMGTWLV. The Cytoplasmic segment spans residues 196–538; that stretch reads ANTVKKATLG…TIPKHEAKEG (343 aa). A PAS domain is found at 216-282; the sequence is QQKEAILQSI…PEVLQVGKGQ (67 aa). The region spanning 339–534 is the Histidine kinase domain; sequence AQTHEFSNKL…CFVLTIPKHE (196 aa). Position 342 is a phosphohistidine; by autocatalysis (histidine 342).

Its subcellular location is the cell membrane. It carries out the reaction ATP + protein L-histidine = ADP + protein N-phospho-L-histidine.. Its function is as follows. Member of the two-component regulatory system CitT/CitS. Functions probably as a membrane-associated protein kinase that phosphorylates CitT in response to environmental citrate or Mg(2+)-citrate complex. The chain is Sensor protein CitS (citS) from Halalkalibacterium halodurans (strain ATCC BAA-125 / DSM 18197 / FERM 7344 / JCM 9153 / C-125) (Bacillus halodurans).